We begin with the raw amino-acid sequence, 452 residues long: Phosphoglucosamine mutase (452 aa).

Ser-97 serves as the catalytic Phosphoserine intermediate. Mg(2+) is bound by residues Ser-97, Asp-236, Asp-238, and Asp-240. A Phosphoserine modification is found at Ser-97.

It belongs to the phosphohexose mutase family. It depends on Mg(2+) as a cofactor. In terms of processing, activated by phosphorylation.

The catalysed reaction is alpha-D-glucosamine 1-phosphate = D-glucosamine 6-phosphate. In terms of biological role, catalyzes the conversion of glucosamine-6-phosphate to glucosamine-1-phosphate. This chain is Phosphoglucosamine mutase, found in Prochlorococcus marinus subsp. pastoris (strain CCMP1986 / NIES-2087 / MED4).